A 244-amino-acid chain; its full sequence is tRNA (guanine-N(1)-)-methyltransferase (244 aa).

S-adenosyl-L-methionine-binding positions include Gly110 and 129–134 (IGDYIL).

Belongs to the RNA methyltransferase TrmD family. In terms of assembly, homodimer.

It localises to the cytoplasm. It carries out the reaction guanosine(37) in tRNA + S-adenosyl-L-methionine = N(1)-methylguanosine(37) in tRNA + S-adenosyl-L-homocysteine + H(+). Specifically methylates guanosine-37 in various tRNAs. The polypeptide is tRNA (guanine-N(1)-)-methyltransferase (Syntrophomonas wolfei subsp. wolfei (strain DSM 2245B / Goettingen)).